The following is a 247-amino-acid chain: ATP synthase subunit a, chloroplastic (247 aa).

Helical transmembrane passes span 38–58, 95–115, 134–154, 199–219, and 220–240; these read QVLI…IVTV, VPFI…GALL, INTT…AGLS, LVVV…VMFL, and GLFT…AYIG.

It belongs to the ATPase A chain family. F-type ATPases have 2 components, CF(1) - the catalytic core - and CF(0) - the membrane proton channel. CF(1) has five subunits: alpha(3), beta(3), gamma(1), delta(1), epsilon(1). CF(0) has four main subunits: a, b, b' and c.

It localises to the plastid. The protein localises to the chloroplast thylakoid membrane. Key component of the proton channel; it plays a direct role in the translocation of protons across the membrane. This is ATP synthase subunit a, chloroplastic from Populus alba (White poplar).